The chain runs to 430 residues: Dye-decolorizing peroxidase Tfu_3078 (430 aa).

A signal peptide (tat-type signal) is located at residues 1–39 (MTEPDTERKGSSRRGFLAGLGAAALTGAGIGMAAGEVLR). The segment at 42 to 75 (LPDSDPAASPEAEQRLRMAAQRADATAAPQPGIS) is disordered. Positions 60–69 (AAQRADATAA) are enriched in low complexity. Aspartate 242 (proton acceptor) is an active-site residue. Position 338 (histidine 338) interacts with heme.

Belongs to the DyP-type peroxidase family. Monomer. It depends on heme b as a cofactor. Exported by the Tat system. The position of the signal peptide cleavage has not been experimentally proven.

It localises to the secreted. The enzyme catalyses Reactive Blue 5 + 2 H2O2 = 2,2'-disulfonyl azobenzene + 3-[(4-amino-6-chloro-1,3,5-triazin-2-yl)amino]benzenesulfonate + phthalate + 2 H2O + 2 H(+). Its function is as follows. Peroxidase that is able to convert a large number of compounds, but its physiological substrate is not known. Shows high reactivity towards anthraquinone dyes (e.g. Reactive Blue 19) and a modest activity towards standard peroxidase substrates (such as guaiacol and 2,6-dimethoxyphenol) and azo dyes (e.g. Reactive Blue 5). Is also able to oxidize aromatic sulfides enantioselectively, resulting in the corresponding (R)-sulfoxides, but with a poor efficiency. Does not display catalase activity. This is Dye-decolorizing peroxidase Tfu_3078 from Thermobifida fusca (strain YX).